A 332-amino-acid polypeptide reads, in one-letter code: Eukaryotic translation initiation factor 3 subunit H (332 aa).

The 136-residue stretch at 18 to 153 folds into the MPN domain; sequence VQVDGLTVLK…LKAFRLSDEM (136 aa). A disordered region spans residues 251–285; sequence QQQKENYLQRRQQENQSRIQRGEDPLPDEDLSKMF.

Belongs to the eIF-3 subunit H family. As to quaternary structure, component of the eukaryotic translation initiation factor 3 (eIF-3) complex.

The protein localises to the cytoplasm. Its function is as follows. Component of the eukaryotic translation initiation factor 3 (eIF-3) complex, which is involved in protein synthesis of a specialized repertoire of mRNAs and, together with other initiation factors, stimulates binding of mRNA and methionyl-tRNAi to the 40S ribosome. The eIF-3 complex specifically targets and initiates translation of a subset of mRNAs involved in cell proliferation. This Nematostella vectensis (Starlet sea anemone) protein is Eukaryotic translation initiation factor 3 subunit H.